A 320-amino-acid chain; its full sequence is Large ribosomal subunit protein uL10y (320 aa).

The segment at 289-320 (AGGGAPAAAKVEEKEESDEEDYGGDFGLFDEE) is disordered. Over residues 302–320 (KEESDEEDYGGDFGLFDEE) the composition is skewed to acidic residues. The residue at position 305 (Ser-305) is a Phosphoserine. Phosphotyrosine is present on Tyr-310.

This sequence belongs to the universal ribosomal protein uL10 family. In terms of assembly, P0 forms a pentameric complex by interaction with dimers of P1 and P2.

Functionally, ribosomal protein P0 is the functional equivalent of E.coli protein L10. This chain is Large ribosomal subunit protein uL10y (RPP0B), found in Arabidopsis thaliana (Mouse-ear cress).